The chain runs to 356 residues: tRNA-specific 2-thiouridylase MnmA (356 aa).

Residues 6-13 (AMSGGVDS) and Leu32 contribute to the ATP site. The Nucleophile role is filled by Cys101. Cysteines 101 and 193 form a disulfide. ATP is bound at residue Gly125. Positions 143–145 (KDQ) are interaction with tRNA. Cys193 acts as the Cysteine persulfide intermediate in catalysis.

Belongs to the MnmA/TRMU family.

It is found in the cytoplasm. It carries out the reaction S-sulfanyl-L-cysteinyl-[protein] + uridine(34) in tRNA + AH2 + ATP = 2-thiouridine(34) in tRNA + L-cysteinyl-[protein] + A + AMP + diphosphate + H(+). Catalyzes the 2-thiolation of uridine at the wobble position (U34) of tRNA, leading to the formation of s(2)U34. This chain is tRNA-specific 2-thiouridylase MnmA, found in Mycobacteroides abscessus (strain ATCC 19977 / DSM 44196 / CCUG 20993 / CIP 104536 / JCM 13569 / NCTC 13031 / TMC 1543 / L948) (Mycobacterium abscessus).